A 399-amino-acid polypeptide reads, in one-letter code: Integral membrane protein GPR137B (399 aa).

Residues 1–22 (MRPERPRPRGSAPGPMETPPWD) are disordered. Over 1–46 (MRPERPRPRGSAPGPMETPPWDPARNDSLPPTLTPAVPPYVKLGLT) the chain is Lumenal. Asn-26 carries an N-linked (GlcNAc...) asparagine glycan. The helical transmembrane segment at 47–67 (VVYTVFYALLFVFIYVQLWLV) threads the bilayer. Over 68 to 79 (LRYRHKRLSYQS) the chain is Cytoplasmic. The helical transmembrane segment at 80-100 (VFLFLCLFWASLRTVLFSFYF) threads the bilayer. At 101–111 (KDFVAANSLSP) the chain is on the lumenal side. A helical transmembrane segment spans residues 112 to 132 (FVFWLLYCFPVCLQFFTLTLM). Residues 133-159 (NLYFTQVIFKAKSKYSPELLKYRLPLY) are Cytoplasmic-facing. Residues 160 to 180 (LASLFISLVFLLVNLTCAVLV) form a helical membrane-spanning segment. The Lumenal segment spans residues 181–188 (KTGNWERK). A helical membrane pass occupies residues 189–209 (VIVSVRVAINDTLFVLCAVSL). Residues 210-237 (SICLYKISKMSLANIYLESKGSSVCQVT) are Cytoplasmic-facing. A helical membrane pass occupies residues 238–258 (AIGVTVILLYTSRACYNLFIL). Residues 259 to 292 (SFSQNKSVHSFDYDWYNVSDQADLKNQLGDAGYV) are Lumenal-facing. 2 N-linked (GlcNAc...) asparagine glycosylation sites follow: Asn-263 and Asn-275. A helical transmembrane segment spans residues 293-313 (LFGVVLFVWELLPTTLVVYFF). At 314-399 (RVRNPTKDLT…TLDPDKPSLG (86 aa)) the chain is on the cytoplasmic side.

It belongs to the GPR137 family. As to quaternary structure, interaction with RRAGA; increases RRAGA recruitment to lysosomes. Interacts with MTOR; this interaction is amino acid sensitive. As to expression, expressed in kidney, heart, brain and placenta.

The protein resides in the lysosome membrane. In terms of biological role, lysosomal integral membrane protein that regulates the localization and activity of mTORC1, a signaling complex promoting cell growth in response to growth factors, energy levels, and amino acids. Interacts with Rag GTPases and increases the lysosomial localization and activity of Rag GTPases and thereby regulates mTORC1 translocation and activity in lysosome. Involved in the regulation of lysosomal morphology and autophagy. Its function is as follows. Also acts as a negative regulator of osteoclast activity. Involved in interleukin-4-induced M2 macrophage polarization. The chain is Integral membrane protein GPR137B (GPR137B) from Homo sapiens (Human).